A 172-amino-acid polypeptide reads, in one-letter code: MSEKEKKELTQECEELKEKYKELEEYAKRLKAEYENYREEVAREKRELIKNANEYLISKLIPVLDDFERALNQGEKGDAFYEGVKMIYKKLLNVLEKEGLTKIHVGEKFDPFEHEAVERVETEDVEEYTVLEVVESGYKFHGKVLKPAKVKVAVKPRKKEAEKVEEPSDKKE.

Belongs to the GrpE family. In terms of assembly, homodimer.

The protein localises to the cytoplasm. Its function is as follows. Participates actively in the response to hyperosmotic and heat shock by preventing the aggregation of stress-denatured proteins, in association with DnaK and GrpE. It is the nucleotide exchange factor for DnaK and may function as a thermosensor. Unfolded proteins bind initially to DnaJ; upon interaction with the DnaJ-bound protein, DnaK hydrolyzes its bound ATP, resulting in the formation of a stable complex. GrpE releases ADP from DnaK; ATP binding to DnaK triggers the release of the substrate protein, thus completing the reaction cycle. Several rounds of ATP-dependent interactions between DnaJ, DnaK and GrpE are required for fully efficient folding. This chain is Protein GrpE, found in Thermotoga sp. (strain RQ2).